The primary structure comprises 182 residues: Large ribosomal subunit protein bL17 (182 aa).

The segment at 126-182 (ERANRVAASKAKKAEAEAAEAKAEEAEEAPEVEADTATDKAAEAEAAEAADEAAEDK) is disordered. Positions 137 to 149 (KKAEAEAAEAKAE) are enriched in basic and acidic residues. 2 stretches are compositionally biased toward acidic residues: residues 150 to 161 (EAEEAPEVEADT) and 170 to 182 (EAAE…AEDK).

Belongs to the bacterial ribosomal protein bL17 family. As to quaternary structure, part of the 50S ribosomal subunit. Contacts protein L32.

The protein is Large ribosomal subunit protein bL17 of Corynebacterium jeikeium (strain K411).